The following is a 147-amino-acid chain: Small ribosomal subunit protein uS5 (147 aa).

The 64-residue stretch at 9 to 72 (FEEVIVDIGR…DDAFKNIVEV (64 aa)) folds into the S5 DRBM domain.

It belongs to the universal ribosomal protein uS5 family. In terms of assembly, part of the 30S ribosomal subunit. Contacts proteins S4 and S8.

With S4 and S12 plays an important role in translational accuracy. In terms of biological role, located at the back of the 30S subunit body where it stabilizes the conformation of the head with respect to the body. The chain is Small ribosomal subunit protein uS5 from Campylobacter jejuni subsp. jejuni serotype O:6 (strain 81116 / NCTC 11828).